A 289-amino-acid chain; its full sequence is Diaminopimelate epimerase (289 aa).

Residues asparagine 11 and asparagine 78 each coordinate substrate. Residue cysteine 87 is the Proton donor of the active site. Substrate contacts are provided by residues 88-89 (GN), asparagine 163, asparagine 199, and 217-218 (ER). Residue cysteine 226 is the Proton acceptor of the active site. Substrate is bound at residue 227–228 (GT).

This sequence belongs to the diaminopimelate epimerase family. As to quaternary structure, homodimer.

Its subcellular location is the cytoplasm. It carries out the reaction (2S,6S)-2,6-diaminopimelate = meso-2,6-diaminopimelate. Its pathway is amino-acid biosynthesis; L-lysine biosynthesis via DAP pathway; DL-2,6-diaminopimelate from LL-2,6-diaminopimelate: step 1/1. Functionally, catalyzes the stereoinversion of LL-2,6-diaminopimelate (L,L-DAP) to meso-diaminopimelate (meso-DAP), a precursor of L-lysine and an essential component of the bacterial peptidoglycan. The chain is Diaminopimelate epimerase from Mycolicibacterium gilvum (strain PYR-GCK) (Mycobacterium gilvum (strain PYR-GCK)).